A 40-amino-acid chain; its full sequence is Cytochrome c3 hydrogenase small chain (40 aa).

Fe cation is required as a cofactor.

The enzyme catalyses 2 Fe(III)-[cytochrome c3] + H2 = 2 Fe(II)-[cytochrome c3] + 2 H(+). This Acidithiobacillus ferrooxidans (Thiobacillus ferrooxidans) protein is Cytochrome c3 hydrogenase small chain (hoxK).